The following is a 241-amino-acid chain: ATP synthase subunit a (241 aa).

5 helical membrane passes run 30–50 (GQVF…VLVG), 89–109 (LPFI…GALI), 128–148 (INTT…AGLS), 193–213 (LAVG…VMLL), and 214–234 (GLFT…FYIG).

This sequence belongs to the ATPase A chain family. In terms of assembly, F-type ATPases have 2 components, CF(1) - the catalytic core - and CF(0) - the membrane proton channel. CF(1) has five subunits: alpha(3), beta(3), gamma(1), delta(1), epsilon(1). CF(0) has four main subunits: a, b, b' and c.

It is found in the cellular thylakoid membrane. Its function is as follows. Key component of the proton channel; it plays a direct role in the translocation of protons across the membrane. The protein is ATP synthase subunit a of Synechococcus sp. (strain CC9902).